The following is a 785-amino-acid chain: Solute carrier family 45 member 4 (785 aa).

The tract at residues 1–43 (MKMAPQNADSESMQVQELPVPLPDPQKPRDPEAETQEETTSEG) is disordered. 6 consecutive transmembrane segments (helical) span residues 64–84 (EFCYAMETALVTPILLQIGLP), 87–107 (YYSLTWFLSPVLGLIFTPLIG), 124–144 (ILALCVGVLIGVALFLNGSAI), 156–176 (PIGIVLTVLGVVVLDFSADAT), 197–217 (LNIHAFSAGLGGAIGYVLGGL), and 234–254 (VLFFFAAVIFSVSVALHLFSI). 2 disordered regions span residues 259–309 (YSPQ…VQSE) and 401–430 (KVPNGRGSPPINSLSRSKVDLKPSVTSGSM). 2 positions are modified to phosphoserine: Ser442 and Ser472. Residues 478 to 505 (DLQQRQRSRHRNQSGATASSGDTESEEG) form a disordered region. The span at 490–499 (QSGATASSGD) shows a compositional bias: low complexity. The residue at position 502 (Ser502) is a Phosphoserine. 6 helical membrane passes run 525–545 (LMWLCLCHLLTWFSVIAEAVF), 577–597 (MGCWGLVIYAATGAICSALLQ), 609–629 (IIYMLGTLGFSVGTAVMAMFP), 631–651 (VYVAMVTISTMGVVSMSISYC), 683–703 (ILSCQVYISQILVASALGGVV), and 709–729 (IVVIPIVASVGSFLGFLTATF). A disordered region spans residues 741 to 772 (KEEQKGLSSGPAGEGEGGAGSEKPTVLKLSRK). Phosphoserine is present on Ser749.

Belongs to the glycoside-pentoside-hexuronide (GPH) cation symporter transporter (TC 2.A.2) family. In terms of tissue distribution, ubiquitously expressed.

The protein resides in the membrane. The catalysed reaction is sucrose(out) + H(+)(out) = sucrose(in) + H(+)(in). Proton-associated sucrose transporter. May be able to transport also glucose and fructose. This is Solute carrier family 45 member 4 (Slc45a4) from Mus musculus (Mouse).